A 290-amino-acid chain; its full sequence is Endonuclease 2 (290 aa).

The signal sequence occupies residues 1 to 27 (MANQKGLHVVMMIITVWLLYAAPNIHG). W28 and H33 together coordinate a divalent metal cation. 28–33 (WGKEGH) contributes to the substrate binding site. The cysteines at positions 37 and 68 are disulfide-linked. Residues D72 and H85 each contribute to the a divalent metal cation site. Residues 72–76 (DRVKF), 85–88 (HYIN), and 94–99 (SYQYNR) each bind substrate. Disulfide bonds link C93–C245, C101–C111, and C226–C232. The substrate site is built by N118 and Y136. N-linked (GlcNAc...) asparagine glycosylation is present at N118. N137 carries N-linked (GlcNAc...) asparagine glycosylation. Residues H147, D151, H157, H181, and D185 each coordinate a divalent metal cation. Positions 147–196 (HFMGDIHQPLHVSYASDKGGNTIEVHWYTRKANLHHIWDSNIIETAEADL) are substrate binding. A glycan (N-linked (GlcNAc...) asparagine) is linked at N211. Positions 283–290 (ATLNRIFG) are cleaved as a propeptide — removed in mature form.

The protein belongs to the nuclease type I family. Monomer. Mn(2+) is required as a cofactor. It depends on Ca(2+) as a cofactor. Zn(2+) serves as cofactor. Post-translationally, N-glycosylation is required for enzymatic stability and activity.

The catalysed reaction is Endonucleolytic cleavage to 5'-phosphomononucleotide and 5'-phosphooligonucleotide end-products.. SsDNase activity is inhibited by the divalent cation chelator EDTA and the reducing agent DTT. Divalent metal ions (e.g. Ca(2+), Mg(2+) and Zn(2+)) and DTT represses RNase activity. RNase activity is enhanced by EDTA. Also repressed by vanadate (VO(4)(3-)) and phosphate (PO(4)(3-)) by occupying the active site. Its function is as follows. Endonuclease mostly active on RNA and ssDNA, and to a lower extent, on dsDNA. Can cleave mismatch regions in heteroduplex DNA containing single base pair mismatches or insertion/deletion bases. In contradiction with PubMed:22506810, cannot hydrolyze single-stranded DNA and does not cleave mismatches. In Arabidopsis thaliana (Mouse-ear cress), this protein is Endonuclease 2.